A 1099-amino-acid polypeptide reads, in one-letter code: Inverted formin-2 (1099 aa).

The GBD/FH3 domain occupies 1–330 (MSLTEGAHTK…RAVLLADDCQ (330 aa)). 2 stretches are compositionally biased toward basic and acidic residues: residues 348–359 (SSKEKRKTDKCT) and 367–385 (QTDK…KKDP). 3 disordered regions span residues 348–391 (SSKE…SGIP), 432–509 (PSPP…PTPP), and 1000–1019 (AEKR…KGEN). One can recognise an FH1 domain in the interval 426-569 (TCSSVLPSPP…GMLPPPPPLP (144 aa)). Residues 452-499 (PLPPPPPPLPGTELSPPPPGMVALSLPPPPPPLPGMGGMLPPPPPPLP) are compositionally biased toward pro residues. One can recognise an FH2 domain in the interval 621 to 1009 (FLKVNKPTLK…AEKRKQQIAD (389 aa)). Positions 907–1019 (LKKLRDLQNK…EETKRQKGEN (113 aa)) form a coiled coil. One can recognise a WH2 domain in the interval 1037–1052 (DDLLADIKKGFQLRKT). Residues 1064-1085 (KTLSSETNRTDIQHVGKRPEVP) are disordered. The span at 1071-1083 (NRTDIQHVGKRPE) shows a compositional bias: basic and acidic residues.

It belongs to the formin homology family.

The sequence is that of Inverted formin-2 (inf2) from Xenopus laevis (African clawed frog).